The sequence spans 401 residues: Voltage-gated potassium channel subunit beta-1 (401 aa).

Residues threonine 90, tryptophan 91, glutamine 97, and aspartate 119 each coordinate NADP(+). The active-site Proton donor/acceptor is tyrosine 124. NADP(+)-binding residues include asparagine 192, serine 222, arginine 223, glutamine 248, tryptophan 277, serine 278, proline 279, leucine 280, alanine 281, cysteine 282, lysine 288, arginine 298, glycine 357, serine 359, glutamine 363, glutamate 366, and asparagine 367.

This sequence belongs to the shaker potassium channel beta subunit family. Homotetramer. Interaction with tetrameric potassium channel alpha subunits gives rise to a heterooctamer.

It localises to the cytoplasm. The protein resides in the membrane. Its subcellular location is the cell membrane. It catalyses the reaction a primary alcohol + NADP(+) = an aldehyde + NADPH + H(+). The enzyme catalyses a secondary alcohol + NADP(+) = a ketone + NADPH + H(+). In terms of biological role, regulatory subunit of the voltage-gated potassium (Kv) channels composed of pore-forming and potassium-conducting alpha subunits and of regulatory beta subunits. The beta-1/KCNAB1 cytoplasmic subunit mediates closure of delayed rectifier potassium channels by physically obstructing the pore via its N-terminal domain and increases the speed of channel closure for other family members. Promotes the inactivation of KCNA1, KCNA2, KCNA4, KCNA5 and KCNA6 alpha subunit-containing channels. Displays nicotinamide adenine dinucleotide phosphate (NADPH)-dependent aldoketoreductase activity by catalyzing the NADPH-dependent reduction of a variety of endogenous aldehydes and ketones. The binding of NADPH is required for efficient down-regulation of potassium channel activity. Oxidation of the bound NADPH restrains N-terminal domain from blocking the channel, thereby decreasing N-type inactivation of potassium channel activity. The chain is Voltage-gated potassium channel subunit beta-1 (KCNAB1) from Gallus gallus (Chicken).